Consider the following 440-residue polypeptide: 3-phosphoshikimate 1-carboxyvinyltransferase (440 aa).

The 3-phosphoshikimate site is built by Lys-19, Ser-20, and Arg-24. Lys-19 is a phosphoenolpyruvate binding site. Residues Gly-92 and Arg-121 each coordinate phosphoenolpyruvate. Positions 166, 168, 315, and 342 each coordinate 3-phosphoshikimate. Gln-168 lines the phosphoenolpyruvate pocket. Asp-315 serves as the catalytic Proton acceptor. Phosphoenolpyruvate is bound by residues Arg-346 and Arg-399.

The protein belongs to the EPSP synthase family. Monomer.

It is found in the cytoplasm. The catalysed reaction is 3-phosphoshikimate + phosphoenolpyruvate = 5-O-(1-carboxyvinyl)-3-phosphoshikimate + phosphate. Its pathway is metabolic intermediate biosynthesis; chorismate biosynthesis; chorismate from D-erythrose 4-phosphate and phosphoenolpyruvate: step 6/7. Functionally, catalyzes the transfer of the enolpyruvyl moiety of phosphoenolpyruvate (PEP) to the 5-hydroxyl of shikimate-3-phosphate (S3P) to produce enolpyruvyl shikimate-3-phosphate and inorganic phosphate. This is 3-phosphoshikimate 1-carboxyvinyltransferase from Leptospira interrogans serogroup Icterohaemorrhagiae serovar copenhageni (strain Fiocruz L1-130).